The following is a 158-amino-acid chain: uncharacterized protein (158 aa).

An HTH hxlR-type domain is found at 13-110; the sequence is ESVGRALELV…WGDEYLPRPE (98 aa).

This is an uncharacterized protein from Mycobacterium tuberculosis (strain ATCC 25618 / H37Rv).